A 316-amino-acid chain; its full sequence is 4-hydroxy-3-methylbut-2-enyl diphosphate reductase (316 aa).

Cys12 is a [4Fe-4S] cluster binding site. 2 residues coordinate (2E)-4-hydroxy-3-methylbut-2-enyl diphosphate: His41 and His74. Residues His41 and His74 each contribute to the dimethylallyl diphosphate site. Residues His41 and His74 each coordinate isopentenyl diphosphate. Cys96 serves as a coordination point for [4Fe-4S] cluster. His124 is a binding site for (2E)-4-hydroxy-3-methylbut-2-enyl diphosphate. His124 provides a ligand contact to dimethylallyl diphosphate. His124 contacts isopentenyl diphosphate. Glu126 serves as the catalytic Proton donor. Thr167 serves as a coordination point for (2E)-4-hydroxy-3-methylbut-2-enyl diphosphate. A [4Fe-4S] cluster-binding site is contributed by Cys197. Residues Ser225, Ser226, Asn227, and Ser269 each coordinate (2E)-4-hydroxy-3-methylbut-2-enyl diphosphate. The dimethylallyl diphosphate site is built by Ser225, Ser226, Asn227, and Ser269. 4 residues coordinate isopentenyl diphosphate: Ser225, Ser226, Asn227, and Ser269.

It belongs to the IspH family. As to quaternary structure, homodimer. The cofactor is [4Fe-4S] cluster.

It carries out the reaction isopentenyl diphosphate + 2 oxidized [2Fe-2S]-[ferredoxin] + H2O = (2E)-4-hydroxy-3-methylbut-2-enyl diphosphate + 2 reduced [2Fe-2S]-[ferredoxin] + 2 H(+). It catalyses the reaction dimethylallyl diphosphate + 2 oxidized [2Fe-2S]-[ferredoxin] + H2O = (2E)-4-hydroxy-3-methylbut-2-enyl diphosphate + 2 reduced [2Fe-2S]-[ferredoxin] + 2 H(+). The protein operates within isoprenoid biosynthesis; dimethylallyl diphosphate biosynthesis; dimethylallyl diphosphate from (2E)-4-hydroxy-3-methylbutenyl diphosphate: step 1/1. It functions in the pathway isoprenoid biosynthesis; isopentenyl diphosphate biosynthesis via DXP pathway; isopentenyl diphosphate from 1-deoxy-D-xylulose 5-phosphate: step 6/6. In terms of biological role, catalyzes the conversion of 1-hydroxy-2-methyl-2-(E)-butenyl 4-diphosphate (HMBPP) into a mixture of isopentenyl diphosphate (IPP) and dimethylallyl diphosphate (DMAPP). Acts in the terminal step of the DOXP/MEP pathway for isoprenoid precursor biosynthesis. This Escherichia coli (strain UTI89 / UPEC) protein is 4-hydroxy-3-methylbut-2-enyl diphosphate reductase.